The following is a 516-amino-acid chain: Thiosulfate sulfurtransferase/rhodanese-like domain-containing protein 2 (516 aa).

S269 bears the Phosphoserine mark. The Rhodanese domain occupies 301–396; it reads EQSDTILLDC…YLEEFPDGFY (96 aa). The Cysteine persulfide intermediate role is filled by C355. The interval 490-516 is disordered; it reads RELLQHVRQPVSPEPGPDAEEDGPVLV. Acidic residues predominate over residues 506-516; it reads PDAEEDGPVLV.

This chain is Thiosulfate sulfurtransferase/rhodanese-like domain-containing protein 2 (TSTD2), found in Pongo abelii (Sumatran orangutan).